Reading from the N-terminus, the 1291-residue chain is Vigilin 1 (1291 aa).

A compositionally biased stretch (polar residues) spans 1–39; that stretch reads MEHLSNLEQPTTMDSYDFQKLTNDENLQGTESQVPSGSK. 2 disordered regions span residues 1 to 45 and 70 to 91; these read MEHL…STNG and HENA…KPAI. Positions 73 to 88 are enriched in low complexity; the sequence is AQQGKKQNNSKSFSKK. Ser-115 carries the post-translational modification Phosphoserine. Positions 124 to 148 are disordered; that stretch reads TSVAGSDSVSRDKIPFSASSRASST. 12 KH domains span residues 166-229, 236-328, 339-405, 416-486, 575-644, 658-726, 741-798, 808-883, 894-957, 967-1040, 1050-1114, and 1219-1280; these read ILSP…RRQI, RETK…QKDI, TTVR…ALYL, TIPT…NSTI, SKFY…LADL, IVSE…VSEI, SHVE…AARI, DTIL…KQEL, AYTS…IKEI, LVEK…ETRL, QVEE…KEMI, and NCIA…KDLI. The tract at residues 266–303 is disordered; it reads TSTRIQIPKRNNTANESSDDAKKPEKEENSAASTLDDL. The segment covering 268–281 has biased composition (polar residues); that stretch reads TRIQIPKRNNTANE. Residues 284–294 show a composition bias toward basic and acidic residues; the sequence is DDAKKPEKEEN. The disordered stretch occupies residues 845 to 865; sequence PREDDSSNSTGNELMKPTSPD. Position 934 is a phosphoserine (Ser-934). Thr-935 is subject to Phosphothreonine.

It localises to the endoplasmic reticulum. It is found in the cytoplasm. Required for cell survival under thermal stress. The polypeptide is Vigilin 1 (vgl1) (Schizosaccharomyces pombe (strain 972 / ATCC 24843) (Fission yeast)).